Consider the following 824-residue polypeptide: Neuronal PAS domain-containing protein 2 (824 aa).

Basic and acidic residues predominate over residues 1-10 (MDEDEKDRAK). Residues 1 to 21 (MDEDEKDRAKRASRNKSEKKR) are disordered. The interval 1–61 (MDEDEKDRAK…VIGFLQKHNE (61 aa)) is sufficient for heterodimer formation with BMAL1, E-box binding and for the effect of NADPH. Positions 9–59 (AKRASRNKSEKKRRDQFNVLIKELSSMLPGNTRKMDKTTVLEKVIGFLQKH) constitute a bHLH domain. The PAS 1 domain occupies 82 to 152 (NEEFTQLMLE…KILSSHMLVT (71 aa)). Heme b contacts are provided by His119 and His171. A PAS 2 domain is found at 237 to 307 (FLKEMCIVDE…RCHQHLMQFG (71 aa)). The PAC domain maps to 311 to 354 (SCCYRFLTKGQQWIWLQTHYYITYHQWNSKPEFIVCTHSVVSYA). Disordered regions lie at residues 367–437 (EDPP…MAEA), 556–667 (SSTQ…PDFS), 681–704 (QPMM…RQVK), and 739–824 (PSFP…QPPR). A compositionally biased stretch (basic and acidic residues) spans 378 to 390 (ALKDKGSSLEPRQ). Residues 421–431 (TAMSEPTSTPT) are compositionally biased toward polar residues. Over residues 559-576 (QRPEAQQQLQQRSAAVTQ) the composition is skewed to low complexity. Residues 587–610 (GQISSAQVTSQHLLRESSVISTQG) show a composition bias toward polar residues. Residues 614–636 (MRSSQLMQSSGRSGSSLVSPFSS) show a composition bias toward low complexity. Composition is skewed to polar residues over residues 645–664 (LNLT…QPSP) and 694–704 (SEVSRTGRQVK). Low complexity predominate over residues 739 to 760 (PSFPASQPSPLQPAQARQQPPQ). The segment covering 766 to 789 (QAPTSLHSEQQDSLLLSTYSQQPG) has biased composition (polar residues). Pro residues predominate over residues 794–805 (PQPPPAQPQPLR). Residues 809–824 (RVSSLSESSGLQQPPR) are compositionally biased toward low complexity.

Component of the circadian clock oscillator which includes the CRY proteins, CLOCK or NPAS2, BMAL1 or BMAL2, CSNK1D and/or CSNK1E, TIMELESS and the PER proteins. Efficient DNA binding requires dimerization with another bHLH protein. Forms a heterodimer with BMAL1 and this heterodimerization is required for E-box-dependent transactivation. Interacts with NCOA3, KAT2B, CREBBP and EP300. Heme is required as a cofactor.

The protein localises to the nucleus. Its activity is regulated as follows. Carbon monoxide (CO) and the redox state of the cell can modulate the transcriptional activity of the NPAS2-BMAL1 heterodimer. NADH and NADPH enhance the DNA-binding activity of the heterodimer whereas CO binds the heme group in NPAS2 and inhibits the DNA-binding activity of the heterodimer. Transcriptional activator which forms a core component of the circadian clock. The circadian clock, an internal time-keeping system, regulates various physiological processes through the generation of approximately 24 hour circadian rhythms in gene expression, which are translated into rhythms in metabolism and behavior. It is derived from the Latin roots 'circa' (about) and 'diem' (day) and acts as an important regulator of a wide array of physiological functions including metabolism, sleep, body temperature, blood pressure, endocrine, immune, cardiovascular, and renal function. Consists of two major components: the central clock, residing in the suprachiasmatic nucleus (SCN) of the brain, and the peripheral clocks that are present in nearly every tissue and organ system. Both the central and peripheral clocks can be reset by environmental cues, also known as Zeitgebers (German for 'timegivers'). The predominant Zeitgeber for the central clock is light, which is sensed by retina and signals directly to the SCN. The central clock entrains the peripheral clocks through neuronal and hormonal signals, body temperature and feeding-related cues, aligning all clocks with the external light/dark cycle. Circadian rhythms allow an organism to achieve temporal homeostasis with its environment at the molecular level by regulating gene expression to create a peak of protein expression once every 24 hours to control when a particular physiological process is most active with respect to the solar day. Transcription and translation of core clock components (CLOCK, NPAS2, BMAL1, BMAL2, PER1, PER2, PER3, CRY1 and CRY2) plays a critical role in rhythm generation, whereas delays imposed by post-translational modifications (PTMs) are important for determining the period (tau) of the rhythms (tau refers to the period of a rhythm and is the length, in time, of one complete cycle). A diurnal rhythm is synchronized with the day/night cycle, while the ultradian and infradian rhythms have a period shorter and longer than 24 hours, respectively. Disruptions in the circadian rhythms contribute to the pathology of cardiovascular diseases, cancer, metabolic syndromes and aging. A transcription/translation feedback loop (TTFL) forms the core of the molecular circadian clock mechanism. Transcription factors, CLOCK or NPAS2 and BMAL1 or BMAL2, form the positive limb of the feedback loop, act in the form of a heterodimer and activate the transcription of core clock genes and clock-controlled genes (involved in key metabolic processes), harboring E-box elements (5'-CACGTG-3') within their promoters. The core clock genes: PER1/2/3 and CRY1/2 which are transcriptional repressors form the negative limb of the feedback loop and interact with the CLOCK|NPAS2-BMAL1|BMAL2 heterodimer inhibiting its activity and thereby negatively regulating their own expression. This heterodimer also activates nuclear receptors NR1D1/2 and RORA/B/G, which form a second feedback loop and which activate and repress BMAL1 transcription, respectively. The NPAS2-BMAL1 heterodimer positively regulates the expression of MAOA, F7 and LDHA and modulates the circadian rhythm of daytime contrast sensitivity by regulating the rhythmic expression of adenylate cyclase type 1 (ADCY1) in the retina. NPAS2 plays an important role in sleep homeostasis and in maintaining circadian behaviors in normal light/dark and feeding conditions and in the effective synchronization of feeding behavior with scheduled food availability. Regulates the gene transcription of key metabolic pathways in the liver and is involved in DNA damage response by regulating several cell cycle and DNA repair genes. Controls the circadian rhythm of NR0B2 expression by binding rhythmically to its promoter. Mediates the diurnal variation in the expression of GABARA1 receptor in the brain and contributes to the regulation of anxiety-like behaviors and GABAergic neurotransmission in the ventral striatum. The polypeptide is Neuronal PAS domain-containing protein 2 (NPAS2) (Homo sapiens (Human)).